Reading from the N-terminus, the 174-residue chain is Photosystem I assembly protein Ycf4 (174 aa).

2 consecutive transmembrane segments (helical) span residues 11–31 and 56–76; these read LSNI…FLNG and IILM…CLTI.

It belongs to the Ycf4 family.

It localises to the plastid. Its subcellular location is the chloroplast thylakoid membrane. Seems to be required for the assembly of the photosystem I complex. The protein is Photosystem I assembly protein Ycf4 of Emiliania huxleyi (Coccolithophore).